Here is a 514-residue protein sequence, read N- to C-terminus: UDP-N-acetylmuramate--L-alanine ligase (514 aa).

Position 127–133 (127–133) interacts with ATP; the sequence is GTHGKTT. Positions 495 to 505 are enriched in low complexity; it reads IGGTIPDIPGG. Residues 495–514 are disordered; it reads IGGTIPDIPGGSTPDASAAG.

Belongs to the MurCDEF family.

It is found in the cytoplasm. The catalysed reaction is UDP-N-acetyl-alpha-D-muramate + L-alanine + ATP = UDP-N-acetyl-alpha-D-muramoyl-L-alanine + ADP + phosphate + H(+). The protein operates within cell wall biogenesis; peptidoglycan biosynthesis. Functionally, cell wall formation. The chain is UDP-N-acetylmuramate--L-alanine ligase from Salinispora tropica (strain ATCC BAA-916 / DSM 44818 / JCM 13857 / NBRC 105044 / CNB-440).